The following is a 94-amino-acid chain: uncharacterized protein (94 aa).

In terms of biological role, could be a silencing control element for the regulation of the restriction system. This is an uncharacterized protein from Herpetosiphon aurantiacus (Herpetosiphon giganteus).